The primary structure comprises 279 residues: Putative pyruvate, phosphate dikinase regulatory protein (279 aa).

Residue 156-163 coordinates ADP; it reads GVSRTSKT.

This sequence belongs to the pyruvate, phosphate/water dikinase regulatory protein family. PDRP subfamily.

The catalysed reaction is N(tele)-phospho-L-histidyl/L-threonyl-[pyruvate, phosphate dikinase] + ADP = N(tele)-phospho-L-histidyl/O-phospho-L-threonyl-[pyruvate, phosphate dikinase] + AMP + H(+). The enzyme catalyses N(tele)-phospho-L-histidyl/O-phospho-L-threonyl-[pyruvate, phosphate dikinase] + phosphate + H(+) = N(tele)-phospho-L-histidyl/L-threonyl-[pyruvate, phosphate dikinase] + diphosphate. Its function is as follows. Bifunctional serine/threonine kinase and phosphorylase involved in the regulation of the pyruvate, phosphate dikinase (PPDK) by catalyzing its phosphorylation/dephosphorylation. The protein is Putative pyruvate, phosphate dikinase regulatory protein of Maricaulis maris (strain MCS10) (Caulobacter maris).